Reading from the N-terminus, the 239-residue chain is Large ribosomal subunit protein uL1 (239 aa).

This sequence belongs to the universal ribosomal protein uL1 family. Part of the 50S ribosomal subunit.

Its function is as follows. Binds directly to 23S rRNA. The L1 stalk is quite mobile in the ribosome, and is involved in E site tRNA release. Functionally, protein L1 is also a translational repressor protein, it controls the translation of the L11 operon by binding to its mRNA. This chain is Large ribosomal subunit protein uL1, found in Rickettsia africae (strain ESF-5).